Consider the following 245-residue polypeptide: Heavy metal-associated isoprenylated plant protein 1 (245 aa).

Residues 28 to 92 (PVHVVLKIDF…KLQKKSKKKV (65 aa)) enclose the HMA 1 domain. A metal cation is bound by residues C39 and C42. Positions 91-113 (KVELISPKPKKDTKENNEKKAND) are disordered. Residues 99–113 (PKKDTKENNEKKAND) are compositionally biased toward basic and acidic residues. One can recognise an HMA 2 domain in the interval 121–188 (VTTVVLKVNC…KLKKTVQVVP (68 aa)). C132 and C135 together coordinate a metal cation. At C242 the chain carries Cysteine methyl ester. C242 carries the S-farnesyl cysteine lipid modification. Residues 243–245 (SVM) constitute a propeptide, removed in mature form.

This sequence belongs to the HIPP family.

Functionally, heavy-metal-binding protein. This Arabidopsis thaliana (Mouse-ear cress) protein is Heavy metal-associated isoprenylated plant protein 1.